A 311-amino-acid polypeptide reads, in one-letter code: tRNA-cytidine(32) 2-sulfurtransferase (311 aa).

Positions 47 to 52 match the PP-loop motif motif; that stretch reads SGGKDS. The [4Fe-4S] cluster site is built by cysteine 122, cysteine 125, and cysteine 213.

Belongs to the TtcA family. In terms of assembly, homodimer. Mg(2+) is required as a cofactor. [4Fe-4S] cluster serves as cofactor.

The protein resides in the cytoplasm. The catalysed reaction is cytidine(32) in tRNA + S-sulfanyl-L-cysteinyl-[cysteine desulfurase] + AH2 + ATP = 2-thiocytidine(32) in tRNA + L-cysteinyl-[cysteine desulfurase] + A + AMP + diphosphate + H(+). Its pathway is tRNA modification. In terms of biological role, catalyzes the ATP-dependent 2-thiolation of cytidine in position 32 of tRNA, to form 2-thiocytidine (s(2)C32). The sulfur atoms are provided by the cysteine/cysteine desulfurase (IscS) system. The protein is tRNA-cytidine(32) 2-sulfurtransferase of Escherichia coli O45:K1 (strain S88 / ExPEC).